The following is a 448-amino-acid chain: MSASAVNVTPGRNVVVVGTQWGDEGKGKIVDWLTDHAQGVVRFQGGHNAGHTLIIGGKKTILRLIPSGIMREGVACYIGNGVVLSPEALFKEIGELEEAGVNVRDRLFISEATTLILPYHIAIDQAREARKGAGKIGTTGRGIGPAYEDKVGRRALRVQDLFDAKTFADRLRENLDFHNFVLTQYLGGAAVDFQATLDTMLGYADRLKPMVADVSRRLYDANNAGQNLLFEGAQGTLLDIDHGTYPFVTSSNCVAGAASAGAGVGPQKLNYILGITKAYCTRVGSGPFPSELYDADNPQRQDQVGVTLANVGKEFGSVTGRPRRTGWLDAAALRRSIQINGVSGLCMTKLDVLDGLDEVKLCVGYKIDGKDADILPRGAADVARCEPVYETFAGWKESTVGIKTWEALPANAQAYLTRVQEVAGVPVDMVSTGPDRDETILLRHPFKV.

Residues 22–28 (GDEGKGK) and 50–52 (GHT) contribute to the GTP site. Asp-23 acts as the Proton acceptor in catalysis. Positions 23 and 50 each coordinate Mg(2+). IMP contacts are provided by residues 23–26 (DEGK), 48–51 (NAGH), Thr-139, Arg-153, Gln-234, Thr-249, and Arg-321. Residue His-51 is the Proton donor of the active site. 317–323 (SVTGRPR) provides a ligand contact to substrate. GTP-binding positions include Arg-323, 349-351 (KLD), and 431-433 (STG).

Belongs to the adenylosuccinate synthetase family. As to quaternary structure, homodimer. Requires Mg(2+) as cofactor.

It is found in the cytoplasm. It catalyses the reaction IMP + L-aspartate + GTP = N(6)-(1,2-dicarboxyethyl)-AMP + GDP + phosphate + 2 H(+). It participates in purine metabolism; AMP biosynthesis via de novo pathway; AMP from IMP: step 1/2. Its function is as follows. Plays an important role in the de novo pathway of purine nucleotide biosynthesis. Catalyzes the first committed step in the biosynthesis of AMP from IMP. The polypeptide is Adenylosuccinate synthetase 1 (Burkholderia lata (strain ATCC 17760 / DSM 23089 / LMG 22485 / NCIMB 9086 / R18194 / 383)).